A 256-amino-acid chain; its full sequence is Dioxygenase lolE1 (256 aa).

Residues His-125, Asp-127, and His-203 each coordinate Fe cation.

The protein belongs to the PhyH family. In terms of assembly, homodimer. The cofactor is Fe cation.

Its pathway is alkaloid biosynthesis. Dioxygenase; part of the gene cluster that mediates the biosynthesis of loline alkaloids, potent insecticidal agents composed of a pyrrolizidine ring system and an uncommon ether bridge linking carbons 2 and 7. Lolines are structurally differentiated by the various modifications of the L-amino group and include norloline, loline, N-methylloline, N-acetylloline, N-acetylnorloline, and N-formylloline. The first committed step is the condensation of O-acetyl-L-homoserine (derived from L-aspartic acid) and L-proline, probably catalyzed by the gamma-type pyridoxal 5'-phosphate(PLP)-dependent enzyme lolC, to give the diamino diacid, NACPP. Ensuing cyclization, decarboxylation, and acetylation steps yield 1-exo-acetamidopyrrolizidine (AcAP). LolO is required for installation of the ether bridge upon the pathway intermediate, 1-exo-acetamidopyrrolizidine (AcAP). In sequential 2-oxoglutarate- and O(2)-consuming steps, lolO removes hydrogens from C2 and C7 of AcAP to form both carbon-oxygen bonds in N-acetylnorloline (NANL), the precursor to all other lolines. The enzymes lolD, lolE, lolF and lolT have also been proposed to be involved in the ether-bridge installation. Further processing of the exocyclic moiety of NANL by fungal N-acetamidase (LolN), methyltransferase (LolM), and cytochrome P450 (LolP) enzymes, with occasional involvement of a plant acetyltransferase, generates the other known lolines. LolN transforms NANL to norlonine which is monomethylated and dimethylated to respectively lonine and N-methyllonine (NML) by lolM. LolP catalyzes hydroxylation of the methyl group in N-methylloline (NML) and further oxygenation to N-formylloline (NFL). A plant acetyltransferase is responsible for the acetylation of loline to form N-acetylloline (NAL). LolA might interact with aspartate kinase to prevent feedback inhibition of its activity by these end products and thereby promote production of L-homoserine from L-aspartate. The chain is Dioxygenase lolE1 from Epichloe uncinata (Endophyte fungus).